The chain runs to 145 residues: Superoxide dismutase [Mn/Fe] (145 aa).

Fe(3+)-binding residues include His10 and His64. Residues His10 and His64 each coordinate Mn(2+).

The protein belongs to the iron/manganese superoxide dismutase family. Mn(2+) serves as cofactor. Requires Fe(3+) as cofactor.

The enzyme catalyses 2 superoxide + 2 H(+) = H2O2 + O2. Functionally, destroys superoxide anion radicals which are normally produced within the cells and which are toxic to biological systems. Catalyzes the dismutation of superoxide anion radicals into O2 and H2O2 by successive reduction and oxidation of the transition metal ion at the active site. The chain is Superoxide dismutase [Mn/Fe] (sodA) from Streptococcus canis.